The chain runs to 215 residues: Nucleoside triphosphate pyrophosphatase (215 aa).

It belongs to the Maf family. A divalent metal cation is required as a cofactor.

The protein localises to the cytoplasm. It carries out the reaction a ribonucleoside 5'-triphosphate + H2O = a ribonucleoside 5'-phosphate + diphosphate + H(+). It catalyses the reaction a 2'-deoxyribonucleoside 5'-triphosphate + H2O = a 2'-deoxyribonucleoside 5'-phosphate + diphosphate + H(+). Functionally, nucleoside triphosphate pyrophosphatase. May have a dual role in cell division arrest and in preventing the incorporation of modified nucleotides into cellular nucleic acids. The sequence is that of Nucleoside triphosphate pyrophosphatase from Rickettsia conorii (strain ATCC VR-613 / Malish 7).